A 213-amino-acid chain; its full sequence is AN1-type zinc finger protein 5 (213 aa).

Residues T8–Q42 form an A20-type zinc finger. Positions 14, 18, 30, and 33 each coordinate Zn(2+). Residues Q39 to P149 form a disordered region. Over residues R40–N75 the composition is skewed to polar residues. 2 positions are modified to phosphoserine: S48 and S58. A compositionally biased stretch (low complexity) spans S120–Q138. Residues S139–K148 show a composition bias toward basic and acidic residues. An AN1-type zinc finger spans residues K148–A194. Residues C154, C157, C168, C170, C175, H178, H184, and C186 each contribute to the Zn(2+) site. Residue K209 is modified to N6-acetyllysine.

In terms of assembly, interacts with ubiquitin and polyubiquitinated proteins. Identified in a heterotrimeric complex with ubiquitin and SQSTM1, where ZFAND5 and SQSTM1 both interact with the same ubiquitin molecule. Homooligomer and/or heterooligomer. Interacts (via A20-type domain) with IKBKG and RIPK1 and with TRAF6 (via AN1-type domain). In terms of tissue distribution, highly expressed in skeletal muscle. Expressed in fetal cochlea. Also expressed in infant brain, fetal heart, pancreatic islet, melanocyte, pineal gland, placenta, corneal stroma, and parathyroid tumor. Weakly expressed or undetectable in adult brain, heart, colon, thymus, spleen, kidney, liver, small intestine, placenta, lung and peripheral blood leukocytes. Expressed in rhabdomyosarcoma RD cells (at protein level).

It localises to the cytoplasm. Its function is as follows. Involved in protein degradation via the ubiquitin-proteasome system. May act by anchoring ubiquitinated proteins to the proteasome. Plays a role in ubiquitin-mediated protein degradation during muscle atrophy. Plays a role in the regulation of NF-kappa-B activation and apoptosis. Inhibits NF-kappa-B activation triggered by overexpression of RIPK1 and TRAF6 but not of RELA. Also inhibits tumor necrosis factor (TNF), IL-1 and TLR4-induced NF-kappa-B activation in a dose-dependent manner. Overexpression sensitizes cells to TNF-induced apoptosis. Is a potent inhibitory factor for osteoclast differentiation. This chain is AN1-type zinc finger protein 5 (ZFAND5), found in Homo sapiens (Human).